The chain runs to 656 residues: MTFELRAAFSPCGDQPEAIAKLTQGVRNRTPSQVLLGTTGSGKTFTIANVVANVNRPTLVLAHNKTLAAQLYQEFKEFFPNNAVEYFISYYDYYQPEAYIARNDTYIEKSLLINSEIDKLRLSATRSILERRDTLIVSSVSCIYGIGSPENYTSMALELTVGTEYPRALLASQLVKMHYQASSVPQRSTFRERGSVIDIFPAYESELAIRLEFFNDTLTSIDYSDPLTMMPKESVTSVILYPGSHYVTPEAVREQAIRSIREELEERLAFFQDRPIEQDRLFHRTTHDIEMIKETGFCKGIENYSRHFTNTPPGAPPTCLLDYFPEDFLLVIDESHQTLPQIRAMYRGDFSRKQSLVEYGFRLPSAYDNRPLTYEEARKYFHNVIYVSATPGETELNESQGHIVEQILRPTGIPDPIPEIRPATGQVDDLLEEIRKRLSKSQEKILVISITKKLAEDIAAFLSELDIAAAYLHSGIETAERTRILSDLRLGNIDVLIGVNLLREGLDLPEVSLVAILDADKEGFLRSTSSLIQFCGRAARNVDGKVIFYADHKTLSIEQTLKETERRRHIQLEYNKANNITPKPIIKAIFANPIPQGGKKAVQDTPQKPLSTQELEKLIKKYENLMLQAANAFRFDEAAQYRDKMKAAKEQLLYLS.

Positions 24 to 409 (QGVRNRTPSQ…QGHIVEQILR (386 aa)) constitute a Helicase ATP-binding domain. ATP is bound at residue 37–44 (GTTGSGKT). The Beta-hairpin signature appears at 90–113 (YYDYYQPEAYIARNDTYIEKSLLI). One can recognise a Helicase C-terminal domain in the interval 426-589 (QVDDLLEEIR…ITPKPIIKAI (164 aa)). A UVR domain is found at 616-651 (EKLIKKYENLMLQAANAFRFDEAAQYRDKMKAAKEQ).

Belongs to the UvrB family. Forms a heterotetramer with UvrA during the search for lesions. Interacts with UvrC in an incision complex.

It is found in the cytoplasm. In terms of biological role, the UvrABC repair system catalyzes the recognition and processing of DNA lesions. A damage recognition complex composed of 2 UvrA and 2 UvrB subunits scans DNA for abnormalities. Upon binding of the UvrA(2)B(2) complex to a putative damaged site, the DNA wraps around one UvrB monomer. DNA wrap is dependent on ATP binding by UvrB and probably causes local melting of the DNA helix, facilitating insertion of UvrB beta-hairpin between the DNA strands. Then UvrB probes one DNA strand for the presence of a lesion. If a lesion is found the UvrA subunits dissociate and the UvrB-DNA preincision complex is formed. This complex is subsequently bound by UvrC and the second UvrB is released. If no lesion is found, the DNA wraps around the other UvrB subunit that will check the other stand for damage. This Chlamydia abortus (strain DSM 27085 / S26/3) (Chlamydophila abortus) protein is UvrABC system protein B.